The primary structure comprises 441 residues: Inner kinetochore subunit mis17 (441 aa).

A compositionally biased stretch (polar residues) spans 160 to 173 (SSILENSPPNKVQR). Residues 160 to 240 (SSILENSPPN…TSSMAPRNLL (81 aa)) form a disordered region. Residues 174-183 (LSSLDSSQDS) are compositionally biased toward low complexity. A compositionally biased stretch (polar residues) spans 192-201 (VTGTTFSSQA). Residues 217–233 (SLTNQSSSLQSSLQTSS) show a composition bias toward low complexity.

It belongs to the CENP-U/AME1 family. In terms of assembly, component of the heterotetrameric kinetochore subcomplex COMA, which consists of fta2, fta7, mal2 and mis17. The COMA subcomplex is part of a larger constitutive centromere-associated network (CCAN) (also known as central kinetochore Sim4 complex in fission yeast), which is composed of at least cnl2, cnp3, cnp20, fta1, fta2, fta3, fta4, fta6, fta7, mal2, mhf1, mhf2, mis6, mis15, mis17, sim4 and wip1. Interacts with mis6 and mis15.

It is found in the nucleus. Its subcellular location is the chromosome. It localises to the centromere. The protein resides in the kinetochore. Its function is as follows. Component of the kinetochore, a multiprotein complex that assembles on centromeric DNA and attaches chromosomes to spindle microtubules, mediating chromosome segregation and sister chromatid segregation during meiosis and mitosis. Component of the inner kinetochore COMA complex, which connects centromere-associated proteins and the outer kinetochore. COMA interacts with other inner kinetochore proteins to form the inner kinetochore constitutive centromere-associated network (CCAN), which serves as a structural platform for outer kinetochore assembly. In Schizosaccharomyces pombe (strain 972 / ATCC 24843) (Fission yeast), this protein is Inner kinetochore subunit mis17 (mis17).